Reading from the N-terminus, the 125-residue chain is Multifunctional methyltransferase subunit TRM112-like protein (125 aa).

Positions 2–119 constitute a TRM112 domain; sequence KLLTHNLLSS…SRGIPNMLLN (118 aa).

This sequence belongs to the TRM112 family. As to quaternary structure, part of the heterodimeric BUD23-TRM112 methyltransferase complex; this heterodimerization is necessary for the metabolic stability and activity of the catalytic subunit BUD23. Part of the heterodimeric N6AMT1-TRM112 methyltransferase complex; this heterodimerization is necessary for S-adenosyl-L-methionine-binding to N6AMT1/HEMK2. Part of the heterodimeric ALKBH8-TRM112 methyltransferase complex. Part of the heterodimeric METTL5-TRM112 methyltransferase complex; this heterodimerization is necessary for the stability of the catalytic subunit METTL5. Part of the heterodimeric THUMPD3-TRM112 methyltransferase complex; this complex forms an active tRNA methyltransferase, where TRMT112 acts as an activator of the catalytic subunit THUMPD3. Part of the heterodimeric THUMPD2-TRM112 methyltransferase complex; this complex forms an active tRNA methyltransferase, where TRMT112 acts as an activator of the catalytic subunit THUMPD2. Part of the heterodimeric TRMT11-TRM112 methyltransferase complex; this complex forms an active tRNA methyltransferase, where TRMT112 acts as an activator of the catalytic subunit TRMT11. Abundantly expressed in the testis, also expressed in the brain, heart, kidney, liver, lung, muscle and spleen.

It localises to the nucleus. The protein resides in the nucleoplasm. It is found in the cytoplasm. The protein localises to the perinuclear region. Functionally, acts as an activator of both rRNA/tRNA and protein methyltransferases. Together with methyltransferase BUD23, methylates the N(7) position of a guanine in 18S rRNA. The heterodimer with HEMK2/N6AMT1 catalyzes N5-methylation of ETF1 on 'Gln-185', using S-adenosyl L-methionine as methyl donor. The heterodimer with ALKBH8 catalyzes the methylation of 5-carboxymethyl uridine to 5-methylcarboxymethyl uridine at the wobble position of the anticodon loop in target tRNA species. Together with methyltransferase THUMPD3, catalyzes the formation of N(2)-methylguanosine at position 6 in a broad range of tRNA substrates and at position 7 of tRNA(Trp). Involved in the pre-rRNA processing steps leading to small-subunit rRNA production. Together with methyltransferase METTL5, specifically methylates the 6th position of adenine in position 1832 of 18S rRNA. The sequence is that of Multifunctional methyltransferase subunit TRM112-like protein (Trmt112) from Mus musculus (Mouse).